The primary structure comprises 1187 residues: Metabotropic glutamate receptor-like protein Q (1187 aa).

Residues 1–735 (MRLFFKFFYL…TIETSNIAKT (735 aa)) are Extracellular-facing. N-linked (GlcNAc...) asparagine glycans are attached at residues N35, N44, N55, N177, N258, N275, N397, N402, N462, N526, N527, N557, N562, and N684. The chain crosses the membrane as a helical span at residues 736–756 (VMIITTSILVLLILLCFGITI). Residues 757-768 (AYSKEKVINFGN) are Cytoplasmic-facing. Residues 769-789 (IVFLILMLFSCLFLCIIIYVS) form a helical membrane-spanning segment. At 790-796 (IEPTNFS) the chain is on the extracellular side. Residue N794 is glycosylated (N-linked (GlcNAc...) asparagine). The helical transmembrane segment at 797 to 817 (CQFSAIVFPIGIGILFTLTLL) threads the bilayer. Topologically, residues 818–843 (KQYKIYKLFKYSDFLKINTDNLKMVK) are cytoplasmic. Residues 844–864 (YAGLIMVPVFLLVLIGVIVYP) traverse the membrane as a helical segment. Residues 865–888 (SKPTFILDLHTKTATKYCISRKYY) lie on the Extracellular side of the membrane. A helical membrane pass occupies residues 889-909 (VFSIVIVVYEVIILLTSCFIA). The Cytoplasmic portion of the chain corresponds to 910-925 (MKSKRYHSTPGTFYES). Residues 926–946 (LFNSILIYNYTLVFIVLIPLF) traverse the membrane as a helical segment. Residues 947–955 (YTLQNNPTT) are Extracellular-facing. The helical transmembrane segment at 956–976 (IYLIYSIGSSILVFATLSIIF) threads the bilayer. Topologically, residues 977–1095 (IPKINFLFRR…SPSSQSIDFL (119 aa)) are cytoplasmic. A compositionally biased stretch (polar residues) spans 1074-1105 (IYPNQIPKQTTNSPSSQSIDFLNNPTIPKNKS). Positions 1074–1187 (IYPNQIPKQT…RKSMDPSLDS (114 aa)) are disordered. Over residues 1114–1124 (KKPKKKLKSKI) the composition is skewed to basic residues. The span at 1125 to 1174 (ISKSANSSPNINNNTINNNNNNNNNNNNNNNNNNNNNNINNNNNNNININ) shows a compositional bias: low complexity.

Belongs to the G-protein coupled receptor 3 family. GABA-B receptor subfamily.

It is found in the membrane. The chain is Metabotropic glutamate receptor-like protein Q (grlQ) from Dictyostelium discoideum (Social amoeba).